Consider the following 1251-residue polypeptide: DNA repair protein REV1 (1251 aa).

The BRCT domain occupies 44–131 (TSSTIFSGVA…RLLSYIPYQL (88 aa)). 2 disordered regions span residues 206–236 (TSPG…NGAL) and 282–342 (STRN…VPSK). The span at 282 to 320 (STRNTDALRNPHRTNSFSLSPLHSNTKINGAHHSTVQGP) shows a compositional bias: polar residues. Over residues 321–342 (SSTKSTSSVSTFSKAAPSVPSK) the composition is skewed to low complexity. The interval 352–362 (FYSHSRLHHIS) is interaction with target DNA. Residues Arg357, 423-427 (DMDCF), 510-516 (SCSYEAR), Asn522, and Asp570 each bind dCTP. A UmuC domain is found at 419–653 (IMHVDMDCFF…QLVTNLPGVG (235 aa)). Asp423 contributes to the Mg(2+) binding site. 2 residues coordinate Mg(2+): Asp570 and Glu571. 2 interaction with target DNA regions span residues 653-656 (GHSM) and 709-717 (RKSVSAEIN). Disordered stretches follow at residues 1035 to 1096 (AYDQ…KLLN) and 1119 to 1147 (HEGP…LQSD). Residues 1043-1056 (GENSTHQQSASASV) show a composition bias toward polar residues. Basic residues predominate over residues 1070–1079 (EKKRNKKKKT). The Nuclear localization signal signature appears at 1071–1078 (KKRNKKKK). A compositionally biased stretch (basic and acidic residues) spans 1119–1129 (HEGPPAEKPLE). A compositionally biased stretch (polar residues) spans 1132-1146 (SASTSGVPGLSSLQS). The segment at 1150–1249 (GCVRPPAPNL…LQQTYGSTLK (100 aa)) is protein interaction domain; mediates interaction with DNA polymerase zeta.

Belongs to the DNA polymerase type-Y family. As to quaternary structure, monomer. Interacts with the DNA polymerase zeta which is composed of REV3L and MAD2L2; the interaction with MAD2L2 is direct and requires that REV3L is in its closed conformation. Interacts with POLH, POLI and POLK. May bind ITGA3. Interacts with FAAP20/C1orf86. In terms of tissue distribution, ubiquitous.

The protein resides in the nucleus. Deoxycytidyl transferase involved in DNA repair. Transfers a dCMP residue from dCTP to the 3'-end of a DNA primer in a template-dependent reaction. May assist in the first step in the bypass of abasic lesions by the insertion of a nucleotide opposite the lesion. Required for normal induction of mutations by physical and chemical agents. The polypeptide is DNA repair protein REV1 (REV1) (Homo sapiens (Human)).